Consider the following 110-residue polypeptide: Small ribosomal subunit protein uS17 (110 aa).

The protein belongs to the universal ribosomal protein uS17 family. Part of the 30S ribosomal subunit.

Functionally, one of the primary rRNA binding proteins, it binds specifically to the 5'-end of 16S ribosomal RNA. The protein is Small ribosomal subunit protein uS17 of Haloquadratum walsbyi (strain DSM 16790 / HBSQ001).